The following is a 221-amino-acid chain: Small ribosomal subunit protein uS3 (221 aa).

Residues 39 to 108 enclose the KH type-2 domain; sequence IRKFVKKRSY…NVIINIVEVK (70 aa).

The protein belongs to the universal ribosomal protein uS3 family. As to quaternary structure, part of the 30S ribosomal subunit. Forms a tight complex with proteins S10 and S14.

In terms of biological role, binds the lower part of the 30S subunit head. Binds mRNA in the 70S ribosome, positioning it for translation. The protein is Small ribosomal subunit protein uS3 of Clostridium novyi (strain NT).